The following is a 77-amino-acid chain: Small ribosomal subunit protein uS17 (77 aa).

It belongs to the universal ribosomal protein uS17 family. Part of the 30S ribosomal subunit.

Its function is as follows. One of the primary rRNA binding proteins, it binds specifically to the 5'-end of 16S ribosomal RNA. The protein is Small ribosomal subunit protein uS17 of Anaplasma marginale (strain St. Maries).